The following is a 246-amino-acid chain: Probable cytokinin riboside 5'-monophosphate phosphoribohydrolase LOGL5 (246 aa).

Residues 1 to 10 (MMMENSREQQ) are compositionally biased toward basic and acidic residues. A disordered region spans residues 1–28 (MMMENSREQQPESSPANNNSKKKKKKKT). Residues Glu103, 121–122 (RK), 138–144 (GYGTLEE), and Thr150 each bind substrate.

It belongs to the LOG family. Expressed in roots and leaves.

It catalyses the reaction N(6)-(dimethylallyl)adenosine 5'-phosphate + H2O = N(6)-dimethylallyladenine + D-ribose 5-phosphate. It carries out the reaction 9-ribosyl-trans-zeatin 5'-phosphate + H2O = trans-zeatin + D-ribose 5-phosphate. In terms of biological role, cytokinin-activating enzyme working in the direct activation pathway. Phosphoribohydrolase that converts inactive cytokinin nucleotides to the biologically active free-base forms. The polypeptide is Probable cytokinin riboside 5'-monophosphate phosphoribohydrolase LOGL5 (LOGL5) (Oryza sativa subsp. japonica (Rice)).